Here is a 469-residue protein sequence, read N- to C-terminus: Sorting and assembly machinery component 50 homolog (469 aa).

One can recognise a POTRA domain in the interval 45 to 125 (VVVQHVHFDG…LDVTFEVTEL (81 aa)). Lysine 255 is subject to N6-methyllysine.

This sequence belongs to the SAM50/omp85 family. As to quaternary structure, associates with the mitochondrial contact site and cristae organizing system (MICOS) complex, composed of at least MICOS10/MIC10, CHCHD3/MIC19, CHCHD6/MIC25, APOOL/MIC27, IMMT/MIC60, APOO/MIC23/MIC26 and QIL1/MIC13. This complex was also known under the names MINOS or MitOS complex. The MICOS complex associates with mitochondrial outer membrane proteins SAMM50, MTX1 and MTX2 (together described as components of the mitochondrial outer membrane sorting assembly machinery (SAM) complex) and DNAJC11, mitochondrial inner membrane protein TMEM11 and with HSPA9. The MICOS and SAM complexes together with DNAJC11 are part of a large protein complex spanning both membranes termed the mitochondrial intermembrane space bridging (MIB) complex. Interacts with IMMT/MIC60. Interacts with CHCHD3/MIC19. Interacts with ARMC1. In terms of assembly, (Microbial infection) Interacts with parasite T.gondii RH strain MAF1b1; the interaction is probably indirect and results in the disruption of the MIB complex and the formation of SPOTs (structures positive for outer mitochondrial membrane (OMM)), a cellular response to OMM stress, which leads to the constitutive shedding of OMM vesicles.

The protein localises to the mitochondrion outer membrane. Its subcellular location is the cytoplasm. The protein resides in the mitochondrion. Plays a crucial role in the maintenance of the structure of mitochondrial cristae and the proper assembly of the mitochondrial respiratory chain complexes. Required for the assembly of TOMM40 into the TOM complex. This chain is Sorting and assembly machinery component 50 homolog (Samm50), found in Mus musculus (Mouse).